A 175-amino-acid polypeptide reads, in one-letter code: Ribulose bisphosphate carboxylase small subunit, chloroplastic (175 aa).

Residues 1 to 34 (MSFATTNKTIVPCATTKQIVRPRFLSNGTISKSR) constitute a chloroplast transit peptide.

Belongs to the RuBisCO small chain family. In terms of assembly, heterohexadecamer of 8 large and 8 small subunits.

The protein resides in the plastid. Its subcellular location is the chloroplast. Its function is as follows. RuBisCO catalyzes two reactions: the carboxylation of D-ribulose 1,5-bisphosphate, the primary event in carbon dioxide fixation, as well as the oxidative fragmentation of the pentose substrate. Both reactions occur simultaneously and in competition at the same active site. Although the small subunit is not catalytic it is essential for maximal activity. The protein is Ribulose bisphosphate carboxylase small subunit, chloroplastic of Batophora oerstedii (Green alga).